The chain runs to 162 residues: NADH-quinone oxidoreductase subunit E (162 aa).

[2Fe-2S] cluster is bound by residues Cys-88, Cys-93, Cys-129, and Cys-133.

Belongs to the complex I 24 kDa subunit family. In terms of assembly, composed of 13 different subunits. Subunits NuoCD, E, F, and G constitute the peripheral sector of the complex. [2Fe-2S] cluster serves as cofactor.

It carries out the reaction a quinone + NADH + 5 H(+)(in) = a quinol + NAD(+) + 4 H(+)(out). Functionally, NDH-1 shuttles electrons from NADH, via FMN and iron-sulfur (Fe-S) centers, to quinones in the respiratory chain. Couples the redox reaction to proton translocation (for every two electrons transferred, four hydrogen ions are translocated across the cytoplasmic membrane), and thus conserves the redox energy in a proton gradient. The protein is NADH-quinone oxidoreductase subunit E (nuoE) of Buchnera aphidicola subsp. Acyrthosiphon pisum (strain APS) (Acyrthosiphon pisum symbiotic bacterium).